Consider the following 291-residue polypeptide: GTPase Era (291 aa).

The Era-type G domain occupies K2–K167. Residues G10–S17 are G1. G10–S17 provides a ligand contact to GTP. Positions N36 to R40 are G2. The interval D57–G60 is G3. GTP-binding positions include D57 to L61 and N116 to D119. A G4 region spans residues N116 to D119. The segment at Y146–S148 is G5. A KH type-2 domain is found at Y186–K274.

It belongs to the TRAFAC class TrmE-Era-EngA-EngB-Septin-like GTPase superfamily. Era GTPase family. Monomer.

It localises to the cytoplasm. It is found in the cell inner membrane. An essential GTPase that binds both GDP and GTP, with rapid nucleotide exchange. Plays a role in 16S rRNA processing and 30S ribosomal subunit biogenesis and possibly also in cell cycle regulation and energy metabolism. This is GTPase Era from Campylobacter jejuni subsp. jejuni serotype O:6 (strain 81116 / NCTC 11828).